Consider the following 133-residue polypeptide: Putative pre-16S rRNA nuclease (133 aa).

The protein belongs to the YqgF nuclease family.

The protein resides in the cytoplasm. Could be a nuclease involved in processing of the 5'-end of pre-16S rRNA. This is Putative pre-16S rRNA nuclease from Bordetella pertussis (strain Tohama I / ATCC BAA-589 / NCTC 13251).